The primary structure comprises 240 residues: Ditrans,polycis-undecaprenyl-diphosphate synthase ((2E,6E)-farnesyl-diphosphate specific) (240 aa).

Asp-18 is an active-site residue. Asp-18 lines the Mg(2+) pocket. Residues 19–22, Trp-23, Arg-31, His-35, and 63–65 contribute to the substrate site; these read GNGR and SSE. The active-site Proton acceptor is Asn-66. Residues Trp-67, Arg-69, Arg-186, and 192–194 contribute to the substrate site; that span reads RIS. Mg(2+) is bound at residue Glu-205.

It belongs to the UPP synthase family. Homodimer. It depends on Mg(2+) as a cofactor.

The enzyme catalyses 8 isopentenyl diphosphate + (2E,6E)-farnesyl diphosphate = di-trans,octa-cis-undecaprenyl diphosphate + 8 diphosphate. Functionally, catalyzes the sequential condensation of isopentenyl diphosphate (IPP) with (2E,6E)-farnesyl diphosphate (E,E-FPP) to yield (2Z,6Z,10Z,14Z,18Z,22Z,26Z,30Z,34E,38E)-undecaprenyl diphosphate (di-trans,octa-cis-UPP). UPP is the precursor of glycosyl carrier lipid in the biosynthesis of bacterial cell wall polysaccharide components such as peptidoglycan and lipopolysaccharide. The polypeptide is Ditrans,polycis-undecaprenyl-diphosphate synthase ((2E,6E)-farnesyl-diphosphate specific) (Pasteurella multocida (strain Pm70)).